A 102-amino-acid chain; its full sequence is Cytochrome b (102 aa).

3 helical membrane passes run 1-21, 45-66, and 81-101; these read FGSL…FLAM, WLIR…YLHI, and WNIG…GYVL. Heme b-binding residues include His51 and His65.

Belongs to the cytochrome b family. As to quaternary structure, the cytochrome bc1 complex contains 3 respiratory subunits (MT-CYB, CYC1 and UQCRFS1), 2 core proteins (UQCRC1 and UQCRC2) and probably 6 low-molecular weight proteins. Heme b serves as cofactor.

It is found in the mitochondrion inner membrane. Its function is as follows. Component of the ubiquinol-cytochrome c reductase complex (complex III or cytochrome b-c1 complex) that is part of the mitochondrial respiratory chain. The b-c1 complex mediates electron transfer from ubiquinol to cytochrome c. Contributes to the generation of a proton gradient across the mitochondrial membrane that is then used for ATP synthesis. This Megalops atlanticus (Tarpon) protein is Cytochrome b (mt-cyb).